Here is a 390-residue protein sequence, read N- to C-terminus: Copper-containing nitrite reductase (390 aa).

An N-terminal signal peptide occupies residues 1 to 18 (MKRQALAAMIASLFALAA). The N-palmitoyl cysteine moiety is linked to residue cysteine 19. Cysteine 19 is lipidated: S-diacylglycerol cysteine. Residues 30–51 (ETPAAAAEAASSAAQTAAETPS) form a disordered region. Plastocyanin-like domains lie at 101–195 (WTFD…ILVE) and 245–346 (GHVG…LKVE). Positions 134, 139, 174, 175, 183, and 188 each coordinate Cu cation. Histidine 139 provides a ligand contact to substrate. Histidine 280 is a binding site for substrate. Position 329 (histidine 329) interacts with Cu cation. Positions 367 to 390 (GAAPAASAPAASAPAASASEKSVY) are disordered. Over residues 368–390 (AAPAASAPAASAPAASASEKSVY) the composition is skewed to low complexity. Repeat copies occupy residues 371–375 (AASAP), 376–380 (AASAP), and 381–385 (AASAS). The segment at 371–385 (AASAPAASAPAASAS) is 3 X 5 AA tandem repeats of A-A-S-A-P.

Belongs to the multicopper oxidase family. Homotrimer. Cu(+) is required as a cofactor. The cofactor is Cu(2+).

It is found in the cell outer membrane. It catalyses the reaction nitric oxide + Fe(III)-[cytochrome c] + H2O = Fe(II)-[cytochrome c] + nitrite + 2 H(+). Its function is as follows. Catalyzes the reduction of nitrite to nitric oxide (NO). It could be essential for growth and survival in oxygen-depleted environments. The protein is Copper-containing nitrite reductase (aniA) of Neisseria meningitidis serogroup B (strain ATCC BAA-335 / MC58).